Here is a 137-residue protein sequence, read N- to C-terminus: MRNSDLAPLYRSAIGFDRLFNLLESGQNQSNGGYPPYNVELVDENNYRIAIAVAGFAEQELEITTQDNLLIVRGSHANEPAQRTYLYQGIAERNFERKFQLAEHIKIKGANLVNGLLYIDLERLVPESLKPRRIEIK.

A sHSP domain is found at 28–137; the sequence is NQSNGGYPPY…SLKPRRIEIK (110 aa).

Belongs to the small heat shock protein (HSP20) family. As to quaternary structure, monomer. Forms homomultimers of about 100-150 subunits at optimal growth temperatures. Conformation changes to monomers at high temperatures or high ionic concentrations.

The protein localises to the cytoplasm. Associates with aggregated proteins, together with IbpB, to stabilize and protect them from irreversible denaturation and extensive proteolysis during heat shock and oxidative stress. Aggregated proteins bound to the IbpAB complex are more efficiently refolded and reactivated by the ATP-dependent chaperone systems ClpB and DnaK/DnaJ/GrpE. Its activity is ATP-independent. The chain is Small heat shock protein IbpA from Yersinia pseudotuberculosis serotype O:1b (strain IP 31758).